Reading from the N-terminus, the 138-residue chain is Nanos homolog 2 (138 aa).

The interval 31–55 (ETQEIEEPSPGPPLGQDQGLGAPGA) is disordered. Residues 62 to 116 (LCNFCKHNGESRHVYSSHQLKTPDGVVVCPILRHYVCPVCGATGDQAHTLKYCPL) form a Nanos-type zinc finger. Zn(2+) is bound by residues Cys63, Cys66, His79, Cys90, Cys98, Cys101, His109, and Cys114. 2 consecutive short sequence motifs (C2HC) follow at residues 63–90 (CNFCKHNGESRHVYSSHQLKTPDGVVVC) and 98–114 (CPVCGATGDQAHTLKYC).

This sequence belongs to the nanos family. As to quaternary structure, interacts with CNOT1, CNOT3, CNOT6L, CNOT7 and CNOT9. Testis and ovary. Expression found in several spermatogenic stages: in cells on the periphery of the tubules which could correspond to spermatogonia, in spermatocytes and in round spermatids (at protein level).

It is found in the cytoplasm. The protein localises to the P-body. Its subcellular location is the perinuclear region. Plays a key role in the sexual differentiation of germ cells by promoting the male fate but suppressing the female fate. Represses the female fate pathways by suppressing meiosis, which in turn results in the promotion of the male fate. Maintains the suppression of meiosis by preventing STRA8 expression, which is required for premeiotic DNA replication, after CYP26B1 is decreased. Regulates the localization of the CCR4-NOT deadenylation complex to P-bodies and plays a role in recruiting the complex to trigger the degradation of mRNAs involved in meiosis. Required for the maintenance of the spermatogonial stem cell population. Not essential for the assembly of P-bodies but is required for the maintenance of their normal state. The chain is Nanos homolog 2 (NANOS2) from Homo sapiens (Human).